The sequence spans 484 residues: Probable UDP-N-acetylglucosamine pyrophosphorylase (484 aa).

Positions 107–110 (LAGG) match the Substrate binding motif. UTP-binding positions include 107-110 (LAGG), K121, Q200, and G226. N227 is a binding site for substrate. D255 serves as a coordination point for UTP. A Substrate binding motif is present at residues 304-305 (EY). K377 lines the UTP pocket. Substrate is bound at residue K407.

This sequence belongs to the UDPGP type 1 family.

Its subcellular location is the cytoplasm. It carries out the reaction N-acetyl-alpha-D-glucosamine 1-phosphate + UTP + H(+) = UDP-N-acetyl-alpha-D-glucosamine + diphosphate. Its pathway is nucleotide-sugar biosynthesis; UDP-N-acetyl-alpha-D-glucosamine biosynthesis; UDP-N-acetyl-alpha-D-glucosamine from N-acetyl-alpha-D-glucosamine 1-phosphate: step 1/1. The sequence is that of Probable UDP-N-acetylglucosamine pyrophosphorylase from Caenorhabditis elegans.